We begin with the raw amino-acid sequence, 473 residues long: ATP synthase subunit beta (473 aa).

153–160 (GGAGVGKT) is a binding site for ATP.

The protein belongs to the ATPase alpha/beta chains family. As to quaternary structure, F-type ATPases have 2 components, CF(1) - the catalytic core - and CF(0) - the membrane proton channel. CF(1) has five subunits: alpha(3), beta(3), gamma(1), delta(1), epsilon(1). CF(0) has three main subunits: a(1), b(2) and c(9-12). The alpha and beta chains form an alternating ring which encloses part of the gamma chain. CF(1) is attached to CF(0) by a central stalk formed by the gamma and epsilon chains, while a peripheral stalk is formed by the delta and b chains.

The protein localises to the cell inner membrane. The enzyme catalyses ATP + H2O + 4 H(+)(in) = ADP + phosphate + 5 H(+)(out). Its function is as follows. Produces ATP from ADP in the presence of a proton gradient across the membrane. The catalytic sites are hosted primarily by the beta subunits. This chain is ATP synthase subunit beta, found in Rickettsia canadensis (strain McKiel).